Consider the following 245-residue polypeptide: tRNA (guanine-N(1)-)-methyltransferase (245 aa).

Residues Gly-111 and Ile-130–Leu-135 each bind S-adenosyl-L-methionine.

This sequence belongs to the RNA methyltransferase TrmD family. Homodimer.

It localises to the cytoplasm. It catalyses the reaction guanosine(37) in tRNA + S-adenosyl-L-methionine = N(1)-methylguanosine(37) in tRNA + S-adenosyl-L-homocysteine + H(+). Functionally, specifically methylates guanosine-37 in various tRNAs. The protein is tRNA (guanine-N(1)-)-methyltransferase of Dictyoglomus turgidum (strain DSM 6724 / Z-1310).